Here is a 143-residue protein sequence, read N- to C-terminus: Spliceosomal protein DIB1 (143 aa).

This sequence belongs to the DIM1 family. As to quaternary structure, component of the 25S [U4/U6.U5] tri-snRNP.

The protein localises to the nucleus. Essential role in pre-mRNA splicing. Also essential for entry into mitosis (G2/M progression) as well as for chromosome segregation during mitosis. The polypeptide is Spliceosomal protein DIB1 (DIB1) (Eremothecium gossypii (strain ATCC 10895 / CBS 109.51 / FGSC 9923 / NRRL Y-1056) (Yeast)).